An 81-amino-acid polypeptide reads, in one-letter code: Antitoxin VapB20 (81 aa).

Antitoxin component of a type II toxin-antitoxin (TA) system. Neutralizes the toxic effect of cognate toxin VapC20. The protein is Antitoxin VapB20 (vapB20) of Mycobacterium tuberculosis (strain CDC 1551 / Oshkosh).